We begin with the raw amino-acid sequence, 118 residues long: NADH-ubiquinone oxidoreductase chain 3 (118 aa).

A run of 3 helical transmembrane segments spans residues 7 to 27 (IFIYLVMSLLVSLILLGLPFL), 62 to 82 (LVSILFIIFDLEVTFFFPWAV), and 87 to 107 (IDLFGFWSMMAFLLILTIGFL).

It belongs to the complex I subunit 3 family.

It is found in the mitochondrion membrane. It catalyses the reaction a ubiquinone + NADH + 5 H(+)(in) = a ubiquinol + NAD(+) + 4 H(+)(out). Core subunit of the mitochondrial membrane respiratory chain NADH dehydrogenase (Complex I) that is believed to belong to the minimal assembly required for catalysis. Complex I functions in the transfer of electrons from NADH to the respiratory chain. The immediate electron acceptor for the enzyme is believed to be ubiquinone. This Allium cepa (Onion) protein is NADH-ubiquinone oxidoreductase chain 3 (ND3).